Here is a 218-residue protein sequence, read N- to C-terminus: Mitochondrial import inner membrane translocase subunit TIM17-1 (218 aa).

Helical transmembrane passes span 19-36 (VGGA…YHLI), 66-82 (FSVW…ALVY), 89-105 (PWNS…FLSL), and 116-133 (ALVG…GIML).

This sequence belongs to the Tim17/Tim22/Tim23 family. Component of the TIM17:23 complex at least composed of TIM23, TIM17 and TIM50. The complex interacts with the TIM44 component of the PAM complex. In terms of tissue distribution, expressed in flowers, leaves and cotyledons, and at very low levels in roots.

It localises to the mitochondrion inner membrane. Functionally, essential component of the TIM17:23 complex, a complex that mediates the translocation of transit peptide-containing proteins across the mitochondrial inner membrane. Links the inner and outer membranes. This Arabidopsis thaliana (Mouse-ear cress) protein is Mitochondrial import inner membrane translocase subunit TIM17-1 (TIM17-1).